The sequence spans 848 residues: Probable disease resistance protein At5g43730 (848 aa).

The stretch at 25-62 (SNYIHLMESNLDALQKTMEELKNGRDDLLARVSIEEDK) forms a coiled coil. Positions 137 to 439 (VAQKIIPKAE…CEGYINPNRY (303 aa)) constitute an NB-ARC domain. An ATP-binding site is contributed by 179–186 (GMGGIGKT). LRR repeat units lie at residues 534–555 (NLST…FFLF), 558–580 (KLVV…ISNL), 582–604 (SLQY…KKLR), 605–627 (KLIY…ATTL), and 629–649 (NLQV…IMEE).

This sequence belongs to the disease resistance NB-LRR family.

Probable disease resistance protein. This Arabidopsis thaliana (Mouse-ear cress) protein is Probable disease resistance protein At5g43730.